Consider the following 273-residue polypeptide: 4-hydroxy-tetrahydrodipicolinate reductase (273 aa).

NAD(+) contacts are provided by residues 12–17 and Glu-38; that span reads GAGGRM. Arg-39 is a binding site for NADP(+). NAD(+)-binding positions include 102–104 and 126–129; these read GTT and AANF. His-159 functions as the Proton donor/acceptor in the catalytic mechanism. His-160 contributes to the (S)-2,3,4,5-tetrahydrodipicolinate binding site. The active-site Proton donor is the Lys-163. 169 to 170 lines the (S)-2,3,4,5-tetrahydrodipicolinate pocket; the sequence is GT.

It belongs to the DapB family. In terms of assembly, homotetramer.

It localises to the cytoplasm. The catalysed reaction is (S)-2,3,4,5-tetrahydrodipicolinate + NAD(+) + H2O = (2S,4S)-4-hydroxy-2,3,4,5-tetrahydrodipicolinate + NADH + H(+). It carries out the reaction (S)-2,3,4,5-tetrahydrodipicolinate + NADP(+) + H2O = (2S,4S)-4-hydroxy-2,3,4,5-tetrahydrodipicolinate + NADPH + H(+). Its pathway is amino-acid biosynthesis; L-lysine biosynthesis via DAP pathway; (S)-tetrahydrodipicolinate from L-aspartate: step 4/4. Catalyzes the conversion of 4-hydroxy-tetrahydrodipicolinate (HTPA) to tetrahydrodipicolinate. The polypeptide is 4-hydroxy-tetrahydrodipicolinate reductase (Shigella boydii serotype 18 (strain CDC 3083-94 / BS512)).